We begin with the raw amino-acid sequence, 155 residues long: Small ribosomal subunit protein uS7 (155 aa).

Belongs to the universal ribosomal protein uS7 family. In terms of assembly, part of the 30S ribosomal subunit. Contacts proteins S9 and S11.

One of the primary rRNA binding proteins, it binds directly to 16S rRNA where it nucleates assembly of the head domain of the 30S subunit. Is located at the subunit interface close to the decoding center, probably blocks exit of the E-site tRNA. This Thermosipho africanus (strain TCF52B) protein is Small ribosomal subunit protein uS7.